The primary structure comprises 378 residues: Dual-specificity RNA methyltransferase RlmN (378 aa).

Glu-96 serves as the catalytic Proton acceptor. A Radical SAM core domain is found at 102-342; that stretch reads QGGRGTLCVS…VRTTRGDDID (241 aa). The cysteines at positions 109 and 345 are disulfide-linked. 3 residues coordinate [4Fe-4S] cluster: Cys-116, Cys-120, and Cys-123. S-adenosyl-L-methionine-binding positions include 170–171, Ser-202, 224–226, and Asn-302; these read GE and SLH. Cys-345 acts as the S-methylcysteine intermediate in catalysis.

It belongs to the radical SAM superfamily. RlmN family. [4Fe-4S] cluster is required as a cofactor.

The protein localises to the cytoplasm. The catalysed reaction is adenosine(2503) in 23S rRNA + 2 reduced [2Fe-2S]-[ferredoxin] + 2 S-adenosyl-L-methionine = 2-methyladenosine(2503) in 23S rRNA + 5'-deoxyadenosine + L-methionine + 2 oxidized [2Fe-2S]-[ferredoxin] + S-adenosyl-L-homocysteine. The enzyme catalyses adenosine(37) in tRNA + 2 reduced [2Fe-2S]-[ferredoxin] + 2 S-adenosyl-L-methionine = 2-methyladenosine(37) in tRNA + 5'-deoxyadenosine + L-methionine + 2 oxidized [2Fe-2S]-[ferredoxin] + S-adenosyl-L-homocysteine. Functionally, specifically methylates position 2 of adenine 2503 in 23S rRNA and position 2 of adenine 37 in tRNAs. m2A2503 modification seems to play a crucial role in the proofreading step occurring at the peptidyl transferase center and thus would serve to optimize ribosomal fidelity. The protein is Dual-specificity RNA methyltransferase RlmN of Pseudomonas paraeruginosa (strain DSM 24068 / PA7) (Pseudomonas aeruginosa (strain PA7)).